The primary structure comprises 415 residues: L-cysteine:1D-myo-inositol 2-amino-2-deoxy-alpha-D-glucopyranoside ligase (415 aa).

Residue cysteine 43 coordinates Zn(2+). Residues 43–46 (CGIT), threonine 58, and 81–83 (NVT) contribute to the L-cysteinyl-5'-AMP site. Residues 45–55 (ITPYDATHLGH) carry the 'HIGH' region motif. The 'ERGGDP' region motif lies at 188-193 (ERGGDP). An L-cysteinyl-5'-AMP-binding site is contributed by tryptophan 229. Position 233 (cysteine 233) interacts with Zn(2+). Position 251–253 (251–253 (GSD)) interacts with L-cysteinyl-5'-AMP. Histidine 258 is a binding site for Zn(2+). Position 285 (valine 285) interacts with L-cysteinyl-5'-AMP. A 'KMSKS' region motif is present at residues 291-295 (KMSKS).

It belongs to the class-I aminoacyl-tRNA synthetase family. MshC subfamily. As to quaternary structure, monomer. It depends on Zn(2+) as a cofactor.

The enzyme catalyses 1D-myo-inositol 2-amino-2-deoxy-alpha-D-glucopyranoside + L-cysteine + ATP = 1D-myo-inositol 2-(L-cysteinylamino)-2-deoxy-alpha-D-glucopyranoside + AMP + diphosphate + H(+). Its function is as follows. Catalyzes the ATP-dependent condensation of GlcN-Ins and L-cysteine to form L-Cys-GlcN-Ins. The polypeptide is L-cysteine:1D-myo-inositol 2-amino-2-deoxy-alpha-D-glucopyranoside ligase (Cellulomonas flavigena (strain ATCC 482 / DSM 20109 / BCRC 11376 / JCM 18109 / NBRC 3775 / NCIMB 8073 / NRS 134)).